The following is a 259-amino-acid chain: Adenosylcobinamide-GDP ribazoletransferase (259 aa).

6 consecutive transmembrane segments (helical) span residues 37–57 (ASRYFGLVGTLIGVLSALVYS), 58–78 (VMLHWVSPSIAIIFAMIASVL), 118–138 (ALALVLCLLLKWQLLSELALF), 143–163 (VSLALILGHTLSRVVAASFIF), 195–215 (AAISLLLISFMQALVLILGLL), and 237–257 (LGATQQIAEVVCYLLLLIVGA).

The protein belongs to the CobS family. Mg(2+) serves as cofactor.

The protein resides in the cell inner membrane. The enzyme catalyses alpha-ribazole + adenosylcob(III)inamide-GDP = adenosylcob(III)alamin + GMP + H(+). The catalysed reaction is alpha-ribazole 5'-phosphate + adenosylcob(III)inamide-GDP = adenosylcob(III)alamin 5'-phosphate + GMP + H(+). The protein operates within cofactor biosynthesis; adenosylcobalamin biosynthesis; adenosylcobalamin from cob(II)yrinate a,c-diamide: step 7/7. Functionally, joins adenosylcobinamide-GDP and alpha-ribazole to generate adenosylcobalamin (Ado-cobalamin). Also synthesizes adenosylcobalamin 5'-phosphate from adenosylcobinamide-GDP and alpha-ribazole 5'-phosphate. This chain is Adenosylcobinamide-GDP ribazoletransferase, found in Shewanella piezotolerans (strain WP3 / JCM 13877).